The following is a 453-amino-acid chain: UDP-N-acetylmuramoylalanine--D-glutamate ligase (453 aa).

An ATP-binding site is contributed by 117 to 123 (GTNGKTT).

This sequence belongs to the MurCDEF family.

The protein resides in the cytoplasm. The catalysed reaction is UDP-N-acetyl-alpha-D-muramoyl-L-alanine + D-glutamate + ATP = UDP-N-acetyl-alpha-D-muramoyl-L-alanyl-D-glutamate + ADP + phosphate + H(+). The protein operates within cell wall biogenesis; peptidoglycan biosynthesis. Cell wall formation. Catalyzes the addition of glutamate to the nucleotide precursor UDP-N-acetylmuramoyl-L-alanine (UMA). This chain is UDP-N-acetylmuramoylalanine--D-glutamate ligase, found in Caldicellulosiruptor saccharolyticus (strain ATCC 43494 / DSM 8903 / Tp8T 6331).